The following is a 222-amino-acid chain: Probable translocation protein y4yL (222 aa).

Helical transmembrane passes span 6 to 26 (PAILALLAITAALGLLVLAVV), 52 to 72 (PNIVLYAAALILTMFVSAPVA), 158 to 178 (IGFLLYLPFIVIDLIVTTILM), and 182 to 202 (MSMVSPTIIAVPFKLFLFVAI).

Belongs to the FliP/MopC/SpaP family.

Its subcellular location is the cell membrane. Its function is as follows. Could be involved in the secretion of an unknown factor. The polypeptide is Probable translocation protein y4yL (Sinorhizobium fredii (strain NBRC 101917 / NGR234)).